Here is a 269-residue protein sequence, read N- to C-terminus: Voltage-gated hydrogen channel 1 (269 aa).

Residues 1–96 (MTSHDPKAVT…RLRKLFSSHR (96 aa)) lie on the Cytoplasmic side of the membrane. Threonine 29 bears the Phosphothreonine mark. A disordered region spans residues 46-79 (ENEEEEEEPAPTSAEGEGNAEGPDAEAGSASTPR). Position 93 is a phosphoserine (serine 93). A helical membrane pass occupies residues 97–117 (FQVIIICLVVLDALLVLAELL). The Extracellular portion of the chain corresponds to 118 to 134 (LDLKIIEPDEQDYAVTA). A helical membrane pass occupies residues 135 to 157 (FHYMSFAILVFFMLEIFFKIFVF). Residues 158–165 (RLEFFHHK) lie on the Cytoplasmic side of the membrane. Residues 166–186 (FEILDAFVVVVSFVLDLVLLF) traverse the membrane as a helical segment. Over 187–193 (KSHHFEA) the chain is Extracellular. A helical membrane pass occupies residues 194–214 (LGLLILLRLWRVARIINGIII). Residues 215 to 269 (SVKTRSERQILRLKQINIQLATKIQHLEFSCSEKEQEIERLNKLLKQNGLLGDVN) are Cytoplasmic-facing. A coiled-coil region spans residues 221–261 (ERQILRLKQINIQLATKIQHLEFSCSEKEQEIERLNKLLKQ).

It belongs to the voltage-gated proton channel (VPC) (TC 1.A.51) family. In terms of assembly, homodimer; each protomer forms its own proton conduction pathway. In terms of processing, phosphorylated in vitro by PRKCD. Phosphorylation may enhance channel gating. In terms of tissue distribution, enriched in immune tissues, such as bone marrow, macrophages and spleen.

It is found in the cell membrane. The protein resides in the apical cell membrane. The protein localises to the cytoplasmic vesicle. Its subcellular location is the phagosome membrane. It localises to the cell projection. It is found in the cilium. The protein resides in the flagellum membrane. The enzyme catalyses H(+)(in) = H(+)(out). Its activity is regulated as follows. The dimers display cooperative channel gating. The channel activity is inhibited by zinc ions. Its function is as follows. Voltage-gated proton-selective channel that conducts outward proton currents in response to intracellular acidification. Lacks a canonical ion-channel pore domain and mediates proton permeability via its voltage sensor domain. Provides for proton efflux that compensates for electron charge generated by NADPH oxidase activity either in the extracellular or phagosomal compartments, thus enabling the production of high levels of bactericidal reactive oxygen species during the respiratory burst. Opens when the pH of airway surface liquid exceeds 7 and contributes to respiratory epithelial acid secretion to maintain pH in the mucosa. The polypeptide is Voltage-gated hydrogen channel 1 (Mus musculus (Mouse)).